The chain runs to 845 residues: Translation initiation factor IF-2 (845 aa).

The disordered stretch occupies residues 1–260 (MSDEQDKPTL…HMTSSGPREK (260 aa)). Pro residues predominate over residues 68–81 (APAPAPAAPRPAAP). Basic and acidic residues predominate over residues 101–140 (REAEEARMAALEENRRREEAERARAAEEERARAEKREEQA). 2 stretches are compositionally biased toward low complexity: residues 141-166 (ATKAPEPAPTPAASAPDATAADAPPA) and 173-191 (TAARPATASAAPAPRRFTP). The segment covering 194–215 (ALKRPEPKRPEPKASRGGENRR) has biased composition (basic and acidic residues). In terms of domain architecture, tr-type G spans 344 to 514 (PRAPVVTIMG…ALQAEIMELK (171 aa)). Residues 353-360 (GHVDHGKT) form a G1 region. Residue 353-360 (GHVDHGKT) participates in GTP binding. The interval 378–382 (GITQH) is G2. Positions 400–403 (DTPG) are G3. GTP-binding positions include 400–404 (DTPGH) and 454–457 (NKVD). The tract at residues 454-457 (NKVD) is G4. The segment at 490–492 (SAL) is G5.

Belongs to the TRAFAC class translation factor GTPase superfamily. Classic translation factor GTPase family. IF-2 subfamily.

It localises to the cytoplasm. In terms of biological role, one of the essential components for the initiation of protein synthesis. Protects formylmethionyl-tRNA from spontaneous hydrolysis and promotes its binding to the 30S ribosomal subunits. Also involved in the hydrolysis of GTP during the formation of the 70S ribosomal complex. This chain is Translation initiation factor IF-2, found in Sphingopyxis alaskensis (strain DSM 13593 / LMG 18877 / RB2256) (Sphingomonas alaskensis).